A 320-amino-acid polypeptide reads, in one-letter code: Fructose-1,6-bisphosphatase class 1 (320 aa).

Residues Glu93, Asp114, Leu116, and Asp117 each contribute to the Mg(2+) site. Substrate contacts are provided by residues 117–120 (DGSS), Tyr225, and Lys256. Glu262 contributes to the Mg(2+) binding site.

The protein belongs to the FBPase class 1 family. In terms of assembly, homotetramer. Requires Mg(2+) as cofactor.

It localises to the cytoplasm. The catalysed reaction is beta-D-fructose 1,6-bisphosphate + H2O = beta-D-fructose 6-phosphate + phosphate. Its pathway is carbohydrate biosynthesis; gluconeogenesis. This chain is Fructose-1,6-bisphosphatase class 1, found in Syntrophotalea carbinolica (strain DSM 2380 / NBRC 103641 / GraBd1) (Pelobacter carbinolicus).